The sequence spans 363 residues: Flagellar P-ring protein 2 (363 aa).

A signal peptide spans 1-18 (MLIRLLLLVICLAGPGVA).

The protein belongs to the FlgI family. As to quaternary structure, the basal body constitutes a major portion of the flagellar organelle and consists of four rings (L,P,S, and M) mounted on a central rod.

Its subcellular location is the periplasm. The protein localises to the bacterial flagellum basal body. Functionally, assembles around the rod to form the L-ring and probably protects the motor/basal body from shearing forces during rotation. In Cereibacter sphaeroides (strain ATCC 17023 / DSM 158 / JCM 6121 / CCUG 31486 / LMG 2827 / NBRC 12203 / NCIMB 8253 / ATH 2.4.1.) (Rhodobacter sphaeroides), this protein is Flagellar P-ring protein 2.